The sequence spans 1031 residues: Toll-like receptor 9 (1031 aa).

A signal peptide spans 1 to 25 (MGPCHGALQPLSLLVQAAMLAVALA). The Extracellular segment spans residues 26–817 (QGTLPPFLPC…LCLDESLSWD (792 aa)). A disulfide bridge links Cys-35 with Cys-45. Position 47 to 51 (47 to 51 (WLFLK)) interacts with DNA. LRR repeat units follow at residues 62–85 (RDNV…DFAQ), 87–110 (SNLQ…HFPC), 122–147 (VPTL…SLVS), 150–166 (LSRT…LTGL), 167–190 (HALR…ALEV), 198–221 (LGNL…LPPS), 223–242 (EYLL…DLAN), 243–268 (LTAL…CVEC), 283–306 (LSRL…WFRG), 308–332 (GNLT…AFQG), 333–356 (LAQL…HLTL), 363–386 (LLSL…TLQP), 390–413 (LPML…IFKD), 414–438 (FPGL…ATTG), 470–494 (CKNL…MFAQ), 496–519 (SRLQ…QFVP), 520–543 (LTSL…SFTE), 545–567 (PRLE…VGHN), 574–598 (LPTL…LCST), 600–622 (LWAL…LYLR), 627–650 (LRSL…TLGN), 652–675 (PKSL…SLTL), 676–699 (LPNL…SLPS), 701–723 (TQLQ…FFAL), 724–747 (ATRL…WFGF), and 749–772 (AGSL…AFVD). Asn-64 carries an N-linked (GlcNAc...) asparagine glycan. Residues 72 to 77 (SNRIHH) and 95 to 109 (KWNC…MHFP) contribute to the DNA site. Residues Cys-98 and Cys-110 are joined by a disulfide bond. The N-linked (GlcNAc...) asparagine glycan is linked to Asn-129. DNA-binding positions include Tyr-132, Arg-152, and 179 to 181 (YYK). Cys-178 and Cys-184 are oxidised to a cystine. A glycan (N-linked (GlcNAc...) asparagine) is linked at Asn-200. Tyr-208 contacts DNA. 2 N-linked (GlcNAc...) asparagine glycosylation sites follow: Asn-210 and Asn-242. 2 disulfide bridges follow: Cys-255-Cys-268 and Cys-258-Cys-265. Cys-258 is lipidated: S-palmitoyl cysteine. Residue Arg-262 participates in DNA binding. Cys-265 carries S-palmitoyl cysteine lipidation. Residues Asn-309 and Asn-340 are each glycosylated (N-linked (GlcNAc...) asparagine). Cys-470 and Cys-500 form a disulfide bridge. N-linked (GlcNAc...) asparagine glycans are attached at residues Asn-472 and Asn-513. N-linked (GlcNAc...) asparagine glycosylation occurs at Asn-567. Residues Asn-669 and Asn-694 are each glycosylated (N-linked (GlcNAc...) asparagine). The N-linked (GlcNAc...) asparagine glycan is linked to Asn-731. 2 disulfides stabilise this stretch: Cys-764–Cys-790 and Cys-766–Cys-809. The chain crosses the membrane as a helical span at residues 818 to 838 (CFGLSLLVVALGLAMPMLHHL). At 839–1031 (CGWDLWYCFH…NFCRGPTMAE (193 aa)) the chain is on the cytoplasmic side. Positions 866–1011 (LSYDAFVVFD…SFWAQLGMAL (146 aa)) constitute a TIR domain.

Belongs to the Toll-like receptor family. As to quaternary structure, monomer and homodimer. Exists as a monomer in the absence of unmethylated cytidine-phosphate-guanosine (CpG) ligand. Proteolytic processing of an insertion loop (Z-loop) is required for homodimerization upon binding to the unmethylated CpG ligand leading to its activation. Interacts with MYD88 via their respective TIR domains. Interacts with BTK. Interacts (via transmembrane domain) with UNC93B1. Interacts with CD300LH; the interaction may promote full activation of TLR9-triggered innate responses. Interacts with CNPY3 and HSP90B1; this interaction is required for proper folding in the endoplasmic reticulum. Interacts with SMPDL3B. Interacts with CD82; this interaction is essential for TLR9-dependent myddosome formation in response to CpG stimulation. Activated by proteolytic cleavage of the flexible loop between repeats LRR14 and LRR15 within the ectodomain. Cleavage requires UNC93B1. Proteolytically processed by first removing the majority of the ectodomain by either asparagine endopeptidase (AEP) or a cathepsin followed by a trimming event that is solely cathepsin mediated and required for optimal receptor signaling. Post-translationally, palmitoylated by ZDHHC3 in the Golgi regulates TLR9 trafficking from the Golgi to endosomes. Depalmitoylation by PPT1 controls the release of TLR9 from UNC93B1 in endosomes. In terms of tissue distribution, expressed in airway epithelium, vascular endothelium and inflammatory cells in blood vessels of the lungs (at protein level). Highly expressed in pulmonary intravascular macrophages (PIMs) and to a lesser extent in alveolar macrophages, neutrophiles, type-II alveolar epithelial cells and bronchial epithelial cells of the lungs (at protein level). High constitutive intracellular expression in leukocytes including polymorphonuclear leukocytes (PMNs), CD4 and CD8 T cells (at protein level). Expressed throughout the respiratory tract including larynx, upper, middle and lower trachea, and bronchus in isolated equine respiratory epithelial cells (ERECs) and in fully differentiated ERECs cultured at the air-fluid interface (AFI) (at protein level). Constitutively expressed in peripheral blood mononuclear cells (PBMCs), lymph nodes and spleen. The level of expression in PBMCs is about 2- to 3-fold higher than that in lymph nodes and spleen. Very low expression in liver, heart, lung, kidney, small intestine, colon and stomach. Low expression in the airway tissue epithelium of the larynx, upper trachea, middle tranchea, lower trachea, bronchus and spleen, and more abundant expression in mesenteric lymph node. Not expressed in fully differentiated bronchus epithelial cells cultured at the AFI for four weeks. Expressed in gingival tissue.

Its subcellular location is the endoplasmic reticulum membrane. It is found in the endosome. It localises to the lysosome. The protein resides in the cytoplasmic vesicle. The protein localises to the phagosome. Its subcellular location is the cell membrane. It is found in the cytoplasm. It localises to the nucleus. Key component of innate and adaptive immunity. TLRs (Toll-like receptors) control host immune response against pathogens through recognition of molecular patterns specific to microorganisms. TLR9 is a nucleotide-sensing TLR which is activated by unmethylated cytidine-phosphate-guanosine (CpG) dinucleotides. Acts via MYD88 and TRAF6, leading to NF-kappa-B activation, cytokine secretion and the inflammatory response. Upon CpG stimulation, induces B-cell proliferation, activation, survival and antibody production. This Equus caballus (Horse) protein is Toll-like receptor 9.